Consider the following 215-residue polypeptide: Programmed cell death protein 10 homolog (215 aa).

Belongs to the PDCD10 family. In terms of assembly, interacts with gck-1. As to expression, expressed in pharynx, intestine, germline, vulva and excretory canals.

Its subcellular location is the cytoplasm. The protein resides in the apical cell membrane. In terms of biological role, involved in excretory canal elongation during postembryonic development. Plays a role in promoting Golgi stability, ER integrity and vesicle transport probably by regulating the activation of Rho GTPase cdc-42. Involved in fertility. The sequence is that of Programmed cell death protein 10 homolog from Caenorhabditis elegans.